Here is a 410-residue protein sequence, read N- to C-terminus: tRNA-guanine(15) transglycosylase (410 aa).

Asp-87 functions as the Nucleophile in the catalytic mechanism. Substrate-binding residues include Asp-122 and Gly-187.

The protein belongs to the archaeosine tRNA-ribosyltransferase family. Zn(2+) is required as a cofactor.

The enzyme catalyses guanosine(15) in tRNA + 7-cyano-7-deazaguanine = 7-cyano-7-carbaguanosine(15) in tRNA + guanine. It participates in tRNA modification; archaeosine-tRNA biosynthesis. Its function is as follows. Exchanges the guanine residue with 7-cyano-7-deazaguanine (preQ0) at position 15 in the dihydrouridine loop (D-loop) of archaeal tRNAs. The sequence is that of tRNA-guanine(15) transglycosylase from Nanoarchaeum equitans (strain Kin4-M).